We begin with the raw amino-acid sequence, 142 residues long: Large ribosomal subunit protein bL17 (142 aa).

The protein belongs to the bacterial ribosomal protein bL17 family. Part of the 50S ribosomal subunit. Contacts protein L32.

In Brucella canis (strain ATCC 23365 / NCTC 10854 / RM-666), this protein is Large ribosomal subunit protein bL17.